Reading from the N-terminus, the 433-residue chain is Trigger factor (433 aa).

Residues Gly-163–Pro-248 enclose the PPIase FKBP-type domain.

It belongs to the FKBP-type PPIase family. Tig subfamily.

It localises to the cytoplasm. The enzyme catalyses [protein]-peptidylproline (omega=180) = [protein]-peptidylproline (omega=0). Involved in protein export. Acts as a chaperone by maintaining the newly synthesized protein in an open conformation. Functions as a peptidyl-prolyl cis-trans isomerase. In Geotalea uraniireducens (strain Rf4) (Geobacter uraniireducens), this protein is Trigger factor.